A 165-amino-acid chain; its full sequence is Growth arrest and DNA damage-inducible protein GADD45 alpha (165 aa).

At Thr2 the chain carries Phosphothreonine.

Belongs to the GADD45 family. Interacts with AURKA, PCNA, GADD45GIP1 and MAPK14.

It is found in the nucleus. Functionally, might affect PCNA interaction with some CDK (cell division protein kinase) complexes; stimulates DNA excision repair in vitro and inhibits entry of cells into S phase. In T-cells, functions as a regulator of p38 MAPKs by inhibiting p88 phosphorylation and activity. The chain is Growth arrest and DNA damage-inducible protein GADD45 alpha (GADD45A) from Cricetulus griseus (Chinese hamster).